The chain runs to 334 residues: MAFNMKNRHLLSLVHHTEREIKYLLDLSRDLKRAKYAGTEQQKLKGKNIALIFEKTSTRTRCAFEVAAYDQGAQVTYIDPNSSQIGHKESMKDTARVLGRMYDGIEYRGFKQSIVQELADYAGVPVFNGLTDEFHPTQMLADVLTMIEHCDKPLSEISYVYIGDARNNMGNSLLLIGAKLGMDVRICGPKALLPEANLVEMCEKFAKESGARITVTEDIDKAVKGVDFIHTDVWVSMGEPLETWGERIKLLLPYQVTPELMKRTGNPKVKFMHCLPAFHNSETKVGRQIAEKYPELANGIEVTEEVFESPMNIAFEQAENRMHTIKAVMVASLA.

Carbamoyl phosphate-binding positions include 57 to 60 (STRT), Q84, R108, and 135 to 138 (HPTQ). L-ornithine is bound by residues N168, D232, and 236–237 (SM). Carbamoyl phosphate is bound by residues 274-275 (CL) and R321.

This sequence belongs to the aspartate/ornithine carbamoyltransferase superfamily. OTCase family.

The protein resides in the cytoplasm. The enzyme catalyses carbamoyl phosphate + L-ornithine = L-citrulline + phosphate + H(+). The protein operates within amino-acid degradation; L-arginine degradation via ADI pathway; carbamoyl phosphate from L-arginine: step 2/2. Reversibly catalyzes the transfer of the carbamoyl group from carbamoyl phosphate (CP) to the N(epsilon) atom of ornithine (ORN) to produce L-citrulline. This chain is Ornithine carbamoyltransferase, catabolic (arcB), found in Haemophilus influenzae (strain ATCC 51907 / DSM 11121 / KW20 / Rd).